Here is a 178-residue protein sequence, read N- to C-terminus: Ribosomal RNA small subunit methyltransferase G (178 aa).

Residues G54, L59, 105 to 106, and R120 each bind S-adenosyl-L-methionine; that span reads LE.

The protein belongs to the methyltransferase superfamily. RNA methyltransferase RsmG family.

It localises to the cytoplasm. The enzyme catalyses guanosine(527) in 16S rRNA + S-adenosyl-L-methionine = N(7)-methylguanosine(527) in 16S rRNA + S-adenosyl-L-homocysteine. In terms of biological role, specifically methylates the N7 position of guanine in position 527 of 16S rRNA. This chain is Ribosomal RNA small subunit methyltransferase G, found in Helicobacter acinonychis (strain Sheeba).